The chain runs to 901 residues: HTH-type transcriptional regulator MalT (901 aa).

Residue 39 to 46 (SPAGYGKT) participates in ATP binding. The 66-residue stretch at 829-894 (ELIRTSPLTQ…DAVQHAQQLL (66 aa)) folds into the HTH luxR-type domain. The H-T-H motif DNA-binding region spans 853–872 (NEQIAGELAVAATTIKTHIR).

Belongs to the MalT family. As to quaternary structure, monomer in solution. Oligomerizes to an active state in the presence of the positive effectors ATP and maltotriose.

With respect to regulation, activated by ATP and maltotriose, which are both required for DNA binding. Functionally, positively regulates the transcription of the maltose regulon whose gene products are responsible for uptake and catabolism of malto-oligosaccharides. Specifically binds to the promoter region of its target genes, recognizing a short DNA motif called the MalT box. In Salmonella choleraesuis (strain SC-B67), this protein is HTH-type transcriptional regulator MalT.